A 415-amino-acid chain; its full sequence is Serine hydroxymethyltransferase (415 aa).

(6S)-5,6,7,8-tetrahydrofolate is bound by residues leucine 115 and 119–121 (GHL). Lysine 224 is subject to N6-(pyridoxal phosphate)lysine. Residue 348–350 (SPF) coordinates (6S)-5,6,7,8-tetrahydrofolate.

Belongs to the SHMT family. Homodimer. Requires pyridoxal 5'-phosphate as cofactor.

Its subcellular location is the cytoplasm. The enzyme catalyses (6R)-5,10-methylene-5,6,7,8-tetrahydrofolate + glycine + H2O = (6S)-5,6,7,8-tetrahydrofolate + L-serine. Its pathway is one-carbon metabolism; tetrahydrofolate interconversion. The protein operates within amino-acid biosynthesis; glycine biosynthesis; glycine from L-serine: step 1/1. In terms of biological role, catalyzes the reversible interconversion of serine and glycine with tetrahydrofolate (THF) serving as the one-carbon carrier. This reaction serves as the major source of one-carbon groups required for the biosynthesis of purines, thymidylate, methionine, and other important biomolecules. Also exhibits THF-independent aldolase activity toward beta-hydroxyamino acids, producing glycine and aldehydes, via a retro-aldol mechanism. The protein is Serine hydroxymethyltransferase of Latilactobacillus sakei subsp. sakei (strain 23K) (Lactobacillus sakei subsp. sakei).